The primary structure comprises 228 residues: Ribose-5-phosphate isomerase A (228 aa).

Substrate contacts are provided by residues 31–34 (TGST), 85–88 (DGAD), and 97–100 (KGGG). The Proton acceptor role is filled by E106. Position 124 (K124) interacts with substrate.

This sequence belongs to the ribose 5-phosphate isomerase family. In terms of assembly, homodimer.

It catalyses the reaction aldehydo-D-ribose 5-phosphate = D-ribulose 5-phosphate. It functions in the pathway carbohydrate degradation; pentose phosphate pathway; D-ribose 5-phosphate from D-ribulose 5-phosphate (non-oxidative stage): step 1/1. In terms of biological role, catalyzes the reversible conversion of ribose-5-phosphate to ribulose 5-phosphate. This is Ribose-5-phosphate isomerase A from Haloarcula marismortui (strain ATCC 43049 / DSM 3752 / JCM 8966 / VKM B-1809) (Halobacterium marismortui).